Reading from the N-terminus, the 357-residue chain is 4-hydroxy-3-methylbut-2-en-1-yl diphosphate synthase (flavodoxin) (357 aa).

The [4Fe-4S] cluster site is built by Cys-264, Cys-267, Cys-299, and Glu-306.

This sequence belongs to the IspG family. The cofactor is [4Fe-4S] cluster.

It catalyses the reaction (2E)-4-hydroxy-3-methylbut-2-enyl diphosphate + oxidized [flavodoxin] + H2O + 2 H(+) = 2-C-methyl-D-erythritol 2,4-cyclic diphosphate + reduced [flavodoxin]. It functions in the pathway isoprenoid biosynthesis; isopentenyl diphosphate biosynthesis via DXP pathway; isopentenyl diphosphate from 1-deoxy-D-xylulose 5-phosphate: step 5/6. Functionally, converts 2C-methyl-D-erythritol 2,4-cyclodiphosphate (ME-2,4cPP) into 1-hydroxy-2-methyl-2-(E)-butenyl 4-diphosphate. In Campylobacter jejuni subsp. jejuni serotype O:6 (strain 81116 / NCTC 11828), this protein is 4-hydroxy-3-methylbut-2-en-1-yl diphosphate synthase (flavodoxin).